Consider the following 280-residue polypeptide: Manganese transport system membrane protein MntC (280 aa).

9 helical membrane passes run 16–36 (ALITSVTVGIVSGVIGSFIIL), 41–61 (LMGDAISHAVLPGVAISYMMG), 62–82 (MNFFIGAATFGIAAALGIGFV), 92–112 (TAIGIVFSAFFALGIILISFA), 137–157 (TIIIAILVISLVAIFYKEFLV), 168–188 (YGLNVRFLHYFLMLLLTLVTV), 193–213 (TVGIILVVAMLITPAATAYLL), 221–241 (IMLASTFGAVSAIIGLYFSYI), and 244–264 (LASGAAMVLVATIIFFIAFLF).

Belongs to the ABC-3 integral membrane protein family.

The protein localises to the cell membrane. This protein is probably a component of a manganese permease, a binding protein-dependent, ATP-driven transport system. This Listeria innocua serovar 6a (strain ATCC BAA-680 / CLIP 11262) protein is Manganese transport system membrane protein MntC (mntC).